A 610-amino-acid polypeptide reads, in one-letter code: Alpha-fetoprotein (610 aa).

Residues 1–18 form the signal peptide; the sequence is MKWVVSFFLLFLLNFSDS. Albumin domains are found at residues 19–210, 211–403, and 404–602; these read RTMH…TSIT, KELR…EELE, and KYIQ…ALIS. H22 lines the Cu(2+) pocket. 8 cysteine pairs are disulfide-bonded: C99–C114, C113–C124, C148–C193, C192–C201, C224–C270, C269–C277, C289–C303, and C302–C314. A phosphoserine mark is found at S111 and S115. Residues N197 and N251 are each glycosylated (N-linked (GlcNAc...) asparagine). S345 carries the phosphoserine modification. Intrachain disulfides connect C385–C394, C417–C463, C462–C473, C486–C502, C501–C512, C539–C584, and C583–C592. S445 is modified (phosphoserine).

The protein belongs to the ALB/AFP/VDB family. As to quaternary structure, dimeric and trimeric forms have been found in addition to the monomeric form. Sulfated. Plasma.

It localises to the secreted. Functionally, binds copper, nickel, and fatty acids as well as, and bilirubin less well than, serum albumin. This is Alpha-fetoprotein (AFP) from Bos taurus (Bovine).